The chain runs to 185 residues: Dihydrofolate reductase 1 (185 aa).

The DHFR domain occupies 8–185; that stretch reads ELVLVVAADE…QASPRPLDDL (178 aa).

The protein belongs to the dihydrofolate reductase family.

The enzyme catalyses (6S)-5,6,7,8-tetrahydrofolate + NADP(+) = 7,8-dihydrofolate + NADPH + H(+). It participates in cofactor biosynthesis; tetrahydrofolate biosynthesis; 5,6,7,8-tetrahydrofolate from 7,8-dihydrofolate: step 1/1. Functionally, key enzyme in folate metabolism. Catalyzes an essential reaction for de novo glycine and purine synthesis, and for DNA precursor synthesis. This is Dihydrofolate reductase 1 (folA1) from Haloarcula marismortui (strain ATCC 43049 / DSM 3752 / JCM 8966 / VKM B-1809) (Halobacterium marismortui).